A 318-amino-acid polypeptide reads, in one-letter code: NF-kappa-B inhibitor alpha (318 aa).

The disordered stretch occupies residues 1–44; sequence MLSAHRPAEPPAVEGCEPPRKERQGGLLPPDDRHDSGLDSMKEE. Basic and acidic residues predominate over residues 17–44; it reads EPPRKERQGGLLPPDDRHDSGLDSMKEE. Lysine 21 is covalently cross-linked (Glycyl lysine isopeptide (Lys-Gly) (interchain with G-Cter in ubiquitin)). Phosphoserine; by IKKA and IKKB is present on serine 36. Serine 40 carries the phosphoserine; by IKKA, IKKB and IKKE modification. The residue at position 46 (tyrosine 46) is a Phosphotyrosine; by Tyr-kinases. ANK repeat units follow at residues 114 to 143, 147 to 176, 186 to 215, and 220 to 249; these read LSQT…DLDV, RGNT…PHHL, NGHT…DVNA, and NGRT…DVNK.

Belongs to the NF-kappa-B inhibitor family. Phosphorylated at Ser-36 and Ser-40 by IKKA/CHUK and IKKB/IKBKB; disables inhibition of NF-kappa-B DNA-binding activity. Phosphorylation at positions 36 and 40 is prerequisite to polyubiquitination and subsequent degradation. Post-translationally, monoubiquitinated at Lys-21 following phosphorylation at Ser-36 and Ser-40. The resulting polyubiquitination leads to protein degradation. In terms of processing, hydroxylated by HIF1AN. As to expression, highly expressed in lymph node, thymus followed by liver, brain, muscle, kidney, gastrointestinal and reproductive tract.

It localises to the cytoplasm. The protein localises to the nucleus. Its function is as follows. Inhibits the activity of dimeric NF-kappa-B/REL complexes by trapping REL (RELA/p65 and NFKB1/p50) dimers in the cytoplasm by masking their nuclear localization signals. On cellular stimulation by immune and pro-inflammatory responses, becomes phosphorylated promoting ubiquitination and degradation, enabling the dimeric RELA to translocate to the nucleus and activate transcription. This is NF-kappa-B inhibitor alpha (NFKBIA) from Gallus gallus (Chicken).